Consider the following 910-residue polypeptide: DNA mismatch repair protein MutS (910 aa).

The span at 1 to 11 (MEAKVEEKEPE) shows a compositional bias: basic and acidic residues. The tract at residues 1-21 (MEAKVEEKEPEPVENAGPDAP) is disordered. 658–665 (GPNMGGKS) lines the ATP pocket.

The protein belongs to the DNA mismatch repair MutS family.

This protein is involved in the repair of mismatches in DNA. It is possible that it carries out the mismatch recognition step. This protein has a weak ATPase activity. This is DNA mismatch repair protein MutS from Brucella canis (strain ATCC 23365 / NCTC 10854 / RM-666).